Consider the following 572-residue polypeptide: Proline--tRNA ligase (572 aa).

This sequence belongs to the class-II aminoacyl-tRNA synthetase family. ProS type 1 subfamily. In terms of assembly, homodimer.

It is found in the cytoplasm. It carries out the reaction tRNA(Pro) + L-proline + ATP = L-prolyl-tRNA(Pro) + AMP + diphosphate. Functionally, catalyzes the attachment of proline to tRNA(Pro) in a two-step reaction: proline is first activated by ATP to form Pro-AMP and then transferred to the acceptor end of tRNA(Pro). As ProRS can inadvertently accommodate and process non-cognate amino acids such as alanine and cysteine, to avoid such errors it has two additional distinct editing activities against alanine. One activity is designated as 'pretransfer' editing and involves the tRNA(Pro)-independent hydrolysis of activated Ala-AMP. The other activity is designated 'posttransfer' editing and involves deacylation of mischarged Ala-tRNA(Pro). The misacylated Cys-tRNA(Pro) is not edited by ProRS. This chain is Proline--tRNA ligase, found in Photorhabdus laumondii subsp. laumondii (strain DSM 15139 / CIP 105565 / TT01) (Photorhabdus luminescens subsp. laumondii).